Reading from the N-terminus, the 215-residue chain is uncharacterized protein (215 aa).

Disordered stretches follow at residues 1-144 (MPKG…PYLR) and 156-215 (IQGH…GAPA). Composition is skewed to low complexity over residues 16–29 (ASTP…ASPT), 49–58 (SSSWPKSPIK), 85–96 (SGSSSPGPSSSR), and 104–127 (STAA…RAAP).

This is an uncharacterized protein from Homo sapiens (Human).